Here is a 316-residue protein sequence, read N- to C-terminus: Probable inactive poly [ADP-ribose] polymerase SRO4 (316 aa).

A disordered region spans residues 1 to 28 (MDYSKTEETPINEEQGSTNSSESRSNEE). Residues 14–23 (EQGSTNSSES) show a composition bias toward low complexity. A PARP catalytic domain is found at 28-255 (ELFSDCDQQH…KSPWISFPVL (228 aa)). The RST domain maps to 243–314 (KNPKSPWISF…IKSVGQKVHK (72 aa)).

It localises to the nucleus. Its function is as follows. Probable inactive ADP-ribosyltransferase that may be involved in stress and developmental responses. This Arabidopsis thaliana (Mouse-ear cress) protein is Probable inactive poly [ADP-ribose] polymerase SRO4 (SRO4).